The chain runs to 80 residues: Acyl carrier protein (80 aa).

Residues 2 to 77 (SEINQKVVDI…QVVEYLEKRL (76 aa)) form the Carrier domain. O-(pantetheine 4'-phosphoryl)serine is present on serine 37.

This sequence belongs to the acyl carrier protein (ACP) family. Post-translationally, 4'-phosphopantetheine is transferred from CoA to a specific serine of apo-ACP by AcpS. This modification is essential for activity because fatty acids are bound in thioester linkage to the sulfhydryl of the prosthetic group.

It is found in the cytoplasm. It functions in the pathway lipid metabolism; fatty acid biosynthesis. Carrier of the growing fatty acid chain in fatty acid biosynthesis. The protein is Acyl carrier protein of Amoebophilus asiaticus (strain 5a2).